The following is a 94-amino-acid chain: Co-chaperonin GroES (94 aa).

This sequence belongs to the GroES chaperonin family. As to quaternary structure, heptamer of 7 subunits arranged in a ring. Interacts with the chaperonin GroEL.

It is found in the cytoplasm. Its function is as follows. Together with the chaperonin GroEL, plays an essential role in assisting protein folding. The GroEL-GroES system forms a nano-cage that allows encapsulation of the non-native substrate proteins and provides a physical environment optimized to promote and accelerate protein folding. GroES binds to the apical surface of the GroEL ring, thereby capping the opening of the GroEL channel. This chain is Co-chaperonin GroES, found in Acetivibrio thermocellus (strain ATCC 27405 / DSM 1237 / JCM 9322 / NBRC 103400 / NCIMB 10682 / NRRL B-4536 / VPI 7372) (Clostridium thermocellum).